The following is a 72-amino-acid chain: ATP synthase subunit c (72 aa).

Helical transmembrane passes span 1-21 (MSLGVLAAAIAVGLGALGAGI) and 48-68 (MFIGVALVEALPIIGVVFSFI).

This sequence belongs to the ATPase C chain family. In terms of assembly, F-type ATPases have 2 components, F(1) - the catalytic core - and F(0) - the membrane proton channel. F(1) has five subunits: alpha(3), beta(3), gamma(1), delta(1), epsilon(1). F(0) has three main subunits: a(1), b(2) and c(10-14). The alpha and beta chains form an alternating ring which encloses part of the gamma chain. F(1) is attached to F(0) by a central stalk formed by the gamma and epsilon chains, while a peripheral stalk is formed by the delta and b chains.

It localises to the cell membrane. Its function is as follows. F(1)F(0) ATP synthase produces ATP from ADP in the presence of a proton or sodium gradient. F-type ATPases consist of two structural domains, F(1) containing the extramembraneous catalytic core and F(0) containing the membrane proton channel, linked together by a central stalk and a peripheral stalk. During catalysis, ATP synthesis in the catalytic domain of F(1) is coupled via a rotary mechanism of the central stalk subunits to proton translocation. Functionally, key component of the F(0) channel; it plays a direct role in translocation across the membrane. A homomeric c-ring of between 10-14 subunits forms the central stalk rotor element with the F(1) delta and epsilon subunits. This chain is ATP synthase subunit c, found in Bacillus caldotenax.